A 497-amino-acid chain; its full sequence is ATP synthase subunit alpha 2 (497 aa).

Residue Gly167–Thr174 participates in ATP binding.

This sequence belongs to the ATPase alpha/beta chains family. As to quaternary structure, F-type ATPases have 2 components, CF(1) - the catalytic core - and CF(0) - the membrane proton channel. CF(1) has five subunits: alpha(3), beta(3), gamma(1), delta(1), epsilon(1). CF(0) has four main subunits: a(1), b(1), b'(1) and c(9-12).

Its subcellular location is the cell inner membrane. The enzyme catalyses ATP + H2O + 4 H(+)(in) = ADP + phosphate + 5 H(+)(out). Produces ATP from ADP in the presence of a proton gradient across the membrane. The alpha chain is a regulatory subunit. In Cereibacter sphaeroides (strain ATCC 17029 / ATH 2.4.9) (Rhodobacter sphaeroides), this protein is ATP synthase subunit alpha 2.